A 1978-amino-acid chain; its full sequence is MSTEDEKLLKEAKKLPWEDRLGHKNWKVRNEANVDLASVFDSITDPKDPRLRDFGHLFRKTVADSNAPVQEKALDALIAFLRAADSDAGRYAKEVCDAIALKCLTGRKNTVDKAQAAFLLWVELEAVDVFLDTMEKAIKNKVAKAVVPAVDVMFQALSEFGSKVIPPKRILKMLPELFDHQDQNVRASAKGVTLELCRWIGKDPVKSILFEKMRDTMKKELEAELANVTAGAKPTRKIRSEQDKEPEAEASSDVVGDGPSEEAVADAPQEIDEYDLMDPVDILTPLEKSGFWDGVKATKWSERKEAVAELTKLASTKKIAPGDFSEICRTLKKLITDVNLAVAVEAIQAIGNLACGLRTHFSASSRFMLPVLLEKLKEKKQSVTDPLTQTLQTMYKAGCLNLVDVIEDVKTAVKNKVPLVRSSTLTWLTFCLETSNKALILKAHKEYVPLCMECLNDGTPDVRDAAFSALAAIAKSVGMRPLERSLEKLDDVRKKKLSEMIAGSGGGDQAGTSSVTVQSSVGSTATGNSDASFVRKSAASMLSGKRPAPSAQASKKVGTGKPGGGKKDGSVRNEGSKSVEPPEDVEPAEMGLEEIENRLGSLVKPETVSQLKSSVWKERLEATLALKEEIEGLQELDKSVEILVRLLCAVPGWNEKNVQVQQQVIEIITYISSTAAKFPKKCVVLCITGTSERVADIKTRASAMKCLTAFCEAVGPGFVFERLFKIMKEHKNPKVLSEGLLWMVSAVDDFGVSLLKLKDLIDFCKDVGLQSSTAATRNATIKLLGALHKFVGPDIKGFLNDVKPALLSALDTEYEKNPFEGTAAPKRVVKTSVSTSTSSGGLDSLPREDISTKITPNLLKGFESPDWKMRLESIEAVNKILEEANKRIQPTGTGELFGGLRGRLLDSNKNLVMQTLTTIGGVAAAMGPAVEKASKGILSDVLKCLGDNKKHMRECTLAALDLWLGAVHLDKMIPYIIIALTDGKMGAEGRKDLFDWLTKQLTGLSDFVDAIHLLKPASTAMTDKSADVRKAAEGCISEILRVSGQEMIEKNLKDIQGPALALVLEKVRPGFVQEPFESSKAMAGPVSKGVTKISKSTSNGTLKQGNRSRAVPTKGSSQITSVHDIAIQSQALLNTKDSNKEDRERVVVRRIKFEELRPEQIQDLENDMMKFFREDLQKRLLSPDFKKQVDGLEILQKALPSVSKEIIEVLDVLLRWFVLQFCKSNTTCLLKVLEFLPELFNTLRDEEYCMTEAEAAIFLPCLAEKLGHNIEKVREKMRELMKQIIQAYSVGKTYPYILEGLRSKNNRTRIECTDLIGYLLETCGTEIGGLLKYLNIVASLTAERDGELRKAALNTMATGYQILGADIWKYVGKLTDAQKSMIDDRFKWKAKDMEKRREGKPGEARAALRRSVRDSGPEVAEQSGDISQTVPGPLFPRQSYGISEQMLERTPVPRTIAGVNGPTDWNEALDIIMFGSPEQSVEGMKVVCHELAQASNDPEESAIDELVKDADGLVSCLANKVAKTFDVSLMGASSRSCKYVLNTLMQTFQNKKLAHAVKEGTLESLITELLLWLLDERVPRMEDGSQLLKALNVLMLKILDNADRTSSFVVLISLLRPLDPSRWPSPATAEVYAVRNQKFSDLVVKCLIKLTKLLQSTIYEVDLDRLLQSIHVYLQDLGMEEIRRRAGADDKPLRMVKTVLHELVKLRGAAIKGHLSLVPIDMRPQPIILAYIDLNLETLAAARMLTATGPVGQTHWTDSTANNPSPPANSADVQLKQELGAIFKKIGDKQTSTIGLYDLYHITKSYPKVDIFSQLQNASEAFRTYIRDGLAQVEKNAAAGRTPSSLPLSTPPPSSLALPSPDIPSLSSLDVKPLMNPRSDLYTDDIRASNMNPGVMTGTLDAIRERMKNMQLASSEPVSKPLMPTNDNLSMNQQSVPPSQMGQETVHTHPVVLPMDEKALSGLQARMERLKGGSLEHM.

2 HEAT repeats span residues 48–86 (DPRLRDFGHLFRKTVADSNAPVQEKALDALIAFLRAADS) and 165–202 (IPPKRILKMLPELFDHQDQNVRASAKGVTLELCRWIGK). The interval 230–264 (AGAKPTRKIRSEQDKEPEAEASSDVVGDGPSEEAV) is disordered. The span at 238-247 (IRSEQDKEPE) shows a compositional bias: basic and acidic residues. HEAT repeat units lie at residues 322–359 (GDFSEICRTLKKLITDVNLAVAVEAIQAIGNLACGLRT), 363–400 (ASSRFMLPVLLEKLKEKKQSVTDPLTQTLQTMYKAGCL), and 442–479 (KAHKEYVPLCMECLNDGTPDVRDAAFSALAAIAKSVGM). Residues 501-587 (IAGSGGGDQA…SVEPPEDVEP (87 aa)) form a disordered region. Residues 510 to 527 (AGTSSVTVQSSVGSTATG) show a composition bias toward low complexity. A compositionally biased stretch (basic and acidic residues) spans 565 to 577 (GKKDGSVRNEGSK). HEAT repeat units lie at residues 849–886 (DISTKITPNLLKGFESPDWKMRLESIEAVNKILEEANK), 890–928 (PTGTGELFGGLRGRLLDSNKNLVMQTLTTIGGVAAAMGP), 932–969 (KASKGILSDVLKCLGDNKKHMRECTLAALDLWLGAVHL), and 1008–1045 (VDAIHLLKPASTAMTDKSADVRKAAEGCISEILRVSGQ). Residues 1087 to 1115 (SKGVTKISKSTSNGTLKQGNRSRAVPTKG) form a disordered region. Polar residues predominate over residues 1093–1107 (ISKSTSNGTLKQGNR). HEAT repeat units lie at residues 1230–1253 (LKVLEFLPELFNTLRDEEYCMTEA), 1254–1286 (EAAIFLPCLAEKLGHNIEKVREKMRELMKQIIQ), 1287–1325 (AYSVGKTYPYILEGLRSKNNRTRIECTDLIGYLLETCGT), and 1328–1365 (GGLLKYLNIVASLTAERDGELRKAALNTMATGYQILGA). Positions 1393-1403 (MEKRREGKPGE) are enriched in basic and acidic residues. The disordered stretch occupies residues 1393–1431 (MEKRREGKPGEARAALRRSVRDSGPEVAEQSGDISQTVP). The stretch at 1535-1575 (RSCKYVLNTLMQTFQNKKLAHAVKEGTLESLITELLLWLLD) is one HEAT 14 repeat. The tract at residues 1837-1862 (AAAGRTPSSLPLSTPPPSSLALPSPD) is disordered.

It belongs to the TOG/XMAP215 family. Expressed in roots, cotyledons, rosette leaves, stems, open flowers and green siliques.

The protein resides in the cytoplasm. It is found in the cytoskeleton. Its subcellular location is the phragmoplast. The protein localises to the spindle. Its function is as follows. Microtubule-binding protein that is essential for cortical microtubules organization and function. Essential for maintaining the interphase cortical array and for correct morphogenesis. Promotes rapid growth and shrinkage of microtubules and suppresses the pausing of interphase microtubules. Regulates the structure and function of microtubule arrays during mitosis and cytokinesis. Probably not required for cellulose microfibrils alignment in roots. The protein is Protein MOR1 (MOR1) of Arabidopsis thaliana (Mouse-ear cress).